A 409-amino-acid chain; its full sequence is 23S rRNA (uracil(747)-C(5))-methyltransferase (409 aa).

Cys61, Cys67, Cys70, and Cys137 together coordinate [4Fe-4S] cluster. 4 residues coordinate S-adenosyl-L-methionine: Gln251, Tyr277, Glu298, and Asp339. Cys365 (nucleophile) is an active-site residue.

The protein belongs to the class I-like SAM-binding methyltransferase superfamily. RNA M5U methyltransferase family.

It catalyses the reaction uridine(747) in 23S rRNA + S-adenosyl-L-methionine = 5-methyluridine(747) in 23S rRNA + S-adenosyl-L-homocysteine + H(+). Catalyzes the formation of 5-methyl-uridine at position equivalent to 747 (m5U747) in 23S rRNA. The protein is 23S rRNA (uracil(747)-C(5))-methyltransferase of Pyrococcus furiosus (strain ATCC 43587 / DSM 3638 / JCM 8422 / Vc1).